The primary structure comprises 294 residues: Protein RarD (294 aa).

At 1–11 the chain is on the cytoplasmic side; it reads MDAKQTRQGVL. Residues 12–34 traverse the membrane as a helical segment; sequence LALAAYFIWGIAPAYFKLIYYVP. The 128-residue stretch at 18–145 folds into the EamA domain; that stretch reads FIWGIAPAYF…AVCGVLVQLW (128 aa). Residues 35–37 are Periplasmic-facing; that stretch reads ADE. Residues 38-60 form a helical membrane-spanning segment; that stretch reads ILTHRVIWSFFFMVALLSVSRQW. The Cytoplasmic portion of the chain corresponds to 61-72; that stretch reads RQVKRLLKTPKK. A helical membrane pass occupies residues 73-95; the sequence is IFLLALSAVLVGGNWLLFIWAVN. The Periplasmic segment spans residues 96 to 99; it reads NHHM. Residues 100–122 traverse the membrane as a helical segment; the sequence is LEASLGYFINPLVNILLGMIFLG. Over 123–128 the chain is Cytoplasmic; it reads ERFRRM. The chain crosses the membrane as a helical span at residues 129-146; sequence QWLAVILAVCGVLVQLWT. The Periplasmic portion of the chain corresponds to 147–149; that stretch reads FGS. A helical transmembrane segment spans residues 150–167; that stretch reads LPIIALGLAFSFAFYGLV. The Cytoplasmic segment spans residues 168-179; the sequence is RKKIAVEAQTGM. Residues 180–197 form a helical membrane-spanning segment; sequence LVETLWLLPVAAIYLFGI. Topologically, residues 198–211 are periplasmic; sequence ADSPTSHMGQNALS. Residues 212 to 234 traverse the membrane as a helical segment; sequence LNLLLMAAGVVTTIPLLCFTGAA. Topologically, residues 235–238 are cytoplasmic; the sequence is TRLR. The helical transmembrane segment at 239–261 threads the bilayer; it reads LSTLGFFQYIGPTLMFLLAVTFY. The Periplasmic portion of the chain corresponds to 262–270; the sequence is GEVPGADKM. A helical membrane pass occupies residues 271 to 290; sequence VTFAFIWVALAIFVMDAIYT. Residues 291-294 are Cytoplasmic-facing; sequence QRKK.

It belongs to the EamA transporter family.

Its subcellular location is the cell inner membrane. The protein is Protein RarD (rarD) of Salmonella typhimurium (strain LT2 / SGSC1412 / ATCC 700720).